A 495-amino-acid polypeptide reads, in one-letter code: 3-octaprenyl-4-hydroxybenzoate carboxy-lyase (495 aa).

Asn172 lines the Mn(2+) pocket. Prenylated FMN contacts are provided by residues 175–177 (IYR), 189–191 (RWL), and 194–195 (RG). Glu238 lines the Mn(2+) pocket. Asp287 acts as the Proton donor in catalysis.

This sequence belongs to the UbiD family. Homohexamer. It depends on prenylated FMN as a cofactor. Mn(2+) is required as a cofactor.

The protein localises to the cell membrane. The catalysed reaction is a 4-hydroxy-3-(all-trans-polyprenyl)benzoate + H(+) = a 2-(all-trans-polyprenyl)phenol + CO2. The protein operates within cofactor biosynthesis; ubiquinone biosynthesis. Functionally, catalyzes the decarboxylation of 3-octaprenyl-4-hydroxy benzoate to 2-octaprenylphenol, an intermediate step in ubiquinone biosynthesis. The polypeptide is 3-octaprenyl-4-hydroxybenzoate carboxy-lyase (Marinobacter nauticus (strain ATCC 700491 / DSM 11845 / VT8) (Marinobacter aquaeolei)).